Reading from the N-terminus, the 213-residue chain is ATP synthase peripheral stalk subunit OSCP, mitochondrial (213 aa).

The N-terminal 23 residues, 1–23, are a transit peptide targeting the mitochondrion; sequence MAAPAVSGFSRQVRCFSTSVVRP. Residues 5-23 carry the SIFI-degron motif; that stretch reads AVSGFSRQVRCFSTSVVRP. Residues Lys-54, Lys-60, Lys-70, and Lys-73 each carry the N6-acetyllysine modification. The residue at position 90 (Lys-90) is an N6-succinyllysine. N6-acetyllysine; alternate occurs at positions 100 and 158. Residues Lys-100 and Lys-158 each carry the N6-succinyllysine; alternate modification. 3 positions are modified to N6-acetyllysine: Lys-172, Lys-176, and Lys-192. Position 199 is an N6-succinyllysine (Lys-199).

Belongs to the ATPase delta chain family. In terms of assembly, component of the ATP synthase complex composed at least of ATP5F1A/subunit alpha, ATP5F1B/subunit beta, ATP5MC1/subunit c (homooctomer), MT-ATP6/subunit a, MT-ATP8/subunit 8, ATP5ME/subunit e, ATP5MF/subunit f, ATP5MG/subunit g, ATP5MK/subunit k, ATP5MJ/subunit j, ATP5F1C/subunit gamma, ATP5F1D/subunit delta, ATP5F1E/subunit epsilon, ATP5PF/subunit F6, ATP5PB/subunit b, ATP5PD/subunit d, ATP5PO/subunit OSCP. ATP synthase complex consists of a soluble F(1) head domain (subunits alpha(3) and beta(3)) - the catalytic core - and a membrane F(0) domain - the membrane proton channel (subunits c, a, 8, e, f, g, k and j). These two domains are linked by a central stalk (subunits gamma, delta, and epsilon) rotating inside the F1 region and a stationary peripheral stalk (subunits F6, b, d, and OSCP). Post-translationally, in response to mitochondrial stress, the precursor protein is ubiquitinated by the SIFI complex in the cytoplasm before mitochondrial import, leading to its degradation. Within the SIFI complex, UBR4 initiates ubiquitin chain that are further elongated or branched by KCMF1.

It localises to the mitochondrion. The protein resides in the mitochondrion inner membrane. Its function is as follows. Subunit OSCP, of the mitochondrial membrane ATP synthase complex (F(1)F(0) ATP synthase or Complex V) that produces ATP from ADP in the presence of a proton gradient across the membrane which is generated by electron transport complexes of the respiratory chain. ATP synthase complex consist of a soluble F(1) head domain - the catalytic core - and a membrane F(1) domain - the membrane proton channel. These two domains are linked by a central stalk rotating inside the F(1) region and a stationary peripheral stalk. During catalysis, ATP synthesis in the catalytic domain of F(1) is coupled via a rotary mechanism of the central stalk subunits to proton translocation. In vivo, can only synthesize ATP although its ATP hydrolase activity can be activated artificially in vitro. Part of the complex F(0) domain. Part of the complex F(0) domain and the peripheric stalk, which acts as a stator to hold the catalytic alpha(3)beta(3) subcomplex and subunit a/ATP6 static relative to the rotary elements. The chain is ATP synthase peripheral stalk subunit OSCP, mitochondrial from Rhinolophus ferrumequinum (Greater horseshoe bat).